We begin with the raw amino-acid sequence, 369 residues long: Prenyltransferase malB (369 aa).

Substrate is bound at residue E87. Dimethylallyl diphosphate is bound by residues R100 and Y189. Substrate is bound at residue Y191.

This sequence belongs to the tryptophan dimethylallyltransferase family.

Prenyltransferase; part of the gene cluster that mediates the biosynthesis of malbrancheamide, a dichlorinated fungal indole alkaloid that belongs to a family of natural products containing a characteristic bicyclo[2.2.2]diazaoctane core. The first step of malbrancheamide biosynthesis involves coupling of L-proline and L-tryptophan by malG, a bimodular NRPS, to produce L-Pro-L-Trp aldehyde through reductive offloading. This compound undergoes spontaneous cyclization and dehydration to give a dienamine which is reverse prenylated at C-2 by malE. The other prenyltransferase present in the cluster, malB, displays modest activity, suggesting that may be a redundant gene in the pathway. Subsequently, a [4+2] Diels-Alder cyclo-addition catalyzed by the bifunctional enzyme malC forms the characteristic bicyclo[2.2.2]diazaoctane ring of premalbrancheamid. Finally, the flavin-dependent halogenase malA catalyzes the iterative dichlorination of the indole ring of premalbrancheamide to yield C-9 monochlorinated malbrancheamide B, C-8 monochlorinated isomalbrancheamide B, and dichlorinated malbrancheamide. MalA is also able to brominate premalbrancheamide at C-9 to yield malbrancheamide C, and, to a lesser extend, at C-8 to yield isomalbrancheamide C. Finally, malA can brominate C-9 monochlorinated malbrancheamide B at C-8 to yield malbrancheamide D, or C-8 monochlorinated isomalbrancheamide B at C-9 to produce isomalbrancheamide D. The sequence is that of Prenyltransferase malB from Malbranchea aurantiaca.